Reading from the N-terminus, the 250-residue chain is HTH-type transcriptional regulator KipR (250 aa).

The HTH iclR-type domain occupies 5–65 (NKTVVKSMAL…DASGAYSLGL (61 aa)). Positions 26–45 (LSELVSLTGMPKTSVHRMVS) form a DNA-binding region, H-T-H motif. An IclR-ED domain is found at 80–249 (IRKIAKPVME…ALQISRKIGY (170 aa)).

Transcriptional repressor of the kip gene-containing operon. The sequence is that of HTH-type transcriptional regulator KipR (kipR) from Bacillus subtilis (strain 168).